Consider the following 299-residue polypeptide: Foldase protein PrsA (299 aa).

The signal sequence occupies residues methionine 1–alanine 19. Cysteine 20 carries N-palmitoyl cysteine lipidation. The S-diacylglycerol cysteine moiety is linked to residue cysteine 20. A PpiC domain is found at asparagine 137–aspartate 227.

The protein belongs to the PrsA family.

The protein resides in the cell membrane. It catalyses the reaction [protein]-peptidylproline (omega=180) = [protein]-peptidylproline (omega=0). In terms of biological role, plays a major role in protein secretion by helping the post-translocational extracellular folding of several secreted proteins. The chain is Foldase protein PrsA from Oceanobacillus iheyensis (strain DSM 14371 / CIP 107618 / JCM 11309 / KCTC 3954 / HTE831).